The chain runs to 78 residues: Large ribosomal subunit protein bL28 (78 aa).

It belongs to the bacterial ribosomal protein bL28 family.

This chain is Large ribosomal subunit protein bL28, found in Aromatoleum aromaticum (strain DSM 19018 / LMG 30748 / EbN1) (Azoarcus sp. (strain EbN1)).